The following is an 845-amino-acid chain: Nuclear pore complex protein Nup107 (845 aa).

2 disordered regions span residues 1 to 26 (MADS…MPPQ) and 677 to 702 (QNRP…MASE). Composition is skewed to polar residues over residues 7–26 (PRSS…MPPQ) and 685–694 (TSHAASSQDN).

Belongs to the nucleoporin Nup84/Nup107 family. As to quaternary structure, part of the nuclear pore complex (NPC). As to expression, expressed in spermatocytes (at protein level).

It localises to the nucleus. It is found in the nuclear pore complex. Its subcellular location is the nucleus envelope. The protein resides in the nucleus membrane. The protein localises to the cytoplasm. It localises to the cytoskeleton. It is found in the spindle. Its subcellular location is the chromosome. The protein resides in the nucleus matrix. Plays a role in nuclear pore complex (NPC) assembly and maintenance. Required for nuclear import of Mad. Mediates the association between the nuclear pore complex and a subset of active chromatin regions adjacent to lamin-associated domains. Plays a role in double strand break repair by relocalizing the heterochromatic double strand breaks (DSBs) to the nuclear periphery as part of the homologous recombination (HR) repair process. Regulates cytokinesis during spermatocyte meiosis by maintaining type-B lamin Lam localization to the spindle envelope. Regulates female gonad development and oogenesis. This chain is Nuclear pore complex protein Nup107, found in Drosophila melanogaster (Fruit fly).